A 179-amino-acid chain; its full sequence is Endoribonuclease YbeY (179 aa).

Zn(2+)-binding residues include H141, H145, and H151.

This sequence belongs to the endoribonuclease YbeY family. Zn(2+) is required as a cofactor.

The protein localises to the cytoplasm. Single strand-specific metallo-endoribonuclease involved in late-stage 70S ribosome quality control and in maturation of the 3' terminus of the 16S rRNA. In Synechocystis sp. (strain ATCC 27184 / PCC 6803 / Kazusa), this protein is Endoribonuclease YbeY.